The primary structure comprises 319 residues: 3'-5' exoribonuclease YhaM (319 aa).

Positions 12–90 (EAVDGYLLIK…QLKIASIRPT (79 aa)) form a DNA-binding region, OB. Residues 163–279 (HVVSMLRIGK…LHLIDNIDAK (117 aa)) enclose the HD domain.

The protein belongs to the YhaM family.

Its function is as follows. Shows a 3'-5' exoribonuclease activity. This chain is 3'-5' exoribonuclease YhaM, found in Shouchella clausii (strain KSM-K16) (Alkalihalobacillus clausii).